The chain runs to 195 residues: Pyridoxal 5'-phosphate synthase subunit PdxT (195 aa).

53-55 (GES) serves as a coordination point for L-glutamine. C82 serves as the catalytic Nucleophile. L-glutamine contacts are provided by residues R108 and 134–135 (IR). Catalysis depends on charge relay system residues H173 and E175.

It belongs to the glutaminase PdxT/SNO family. In the presence of PdxS, forms a dodecamer of heterodimers. Only shows activity in the heterodimer.

The enzyme catalyses aldehydo-D-ribose 5-phosphate + D-glyceraldehyde 3-phosphate + L-glutamine = pyridoxal 5'-phosphate + L-glutamate + phosphate + 3 H2O + H(+). The catalysed reaction is L-glutamine + H2O = L-glutamate + NH4(+). It functions in the pathway cofactor biosynthesis; pyridoxal 5'-phosphate biosynthesis. Catalyzes the hydrolysis of glutamine to glutamate and ammonia as part of the biosynthesis of pyridoxal 5'-phosphate. The resulting ammonia molecule is channeled to the active site of PdxS. The polypeptide is Pyridoxal 5'-phosphate synthase subunit PdxT (Methanobrevibacter smithii (strain ATCC 35061 / DSM 861 / OCM 144 / PS)).